Reading from the N-terminus, the 62-residue chain is MGKQCFVTGRKASTGNNRSHALNSSKRRWNANLQKVRILVDGKPKKVWVSARALKSGKVTRV.

The tract at residues Met1–Ser24 is disordered. The span at Lys11–Ser24 shows a compositional bias: polar residues.

It belongs to the bacterial ribosomal protein bL28 family.

The protein is Large ribosomal subunit protein bL28 of Staphylococcus saprophyticus subsp. saprophyticus (strain ATCC 15305 / DSM 20229 / NCIMB 8711 / NCTC 7292 / S-41).